Reading from the N-terminus, the 226-residue chain is Endonuclease V (226 aa).

Mg(2+) contacts are provided by Asp43 and Asp108.

Belongs to the endonuclease V family. It depends on Mg(2+) as a cofactor.

Its subcellular location is the cytoplasm. The enzyme catalyses Endonucleolytic cleavage at apurinic or apyrimidinic sites to products with a 5'-phosphate.. Functionally, DNA repair enzyme involved in the repair of deaminated bases. Selectively cleaves double-stranded DNA at the second phosphodiester bond 3' to a deoxyinosine leaving behind the intact lesion on the nicked DNA. The polypeptide is Endonuclease V (Thermosipho melanesiensis (strain DSM 12029 / CIP 104789 / BI429)).